The following is a 212-amino-acid chain: ATP-dependent dethiobiotin synthetase BioD (212 aa).

13 to 18 (GIGKTV) provides a ligand contact to ATP. Residue threonine 17 coordinates Mg(2+). Residue lysine 33 is part of the active site. Serine 37 serves as a coordination point for substrate. Residue glutamate 100 coordinates Mg(2+). ATP is bound by residues 100–103 (EGAG) and 184–186 (PRL).

It belongs to the dethiobiotin synthetase family. As to quaternary structure, homodimer. It depends on Mg(2+) as a cofactor.

The protein localises to the cytoplasm. It carries out the reaction (7R,8S)-7,8-diammoniononanoate + CO2 + ATP = (4R,5S)-dethiobiotin + ADP + phosphate + 3 H(+). It participates in cofactor biosynthesis; biotin biosynthesis; biotin from 7,8-diaminononanoate: step 1/2. In terms of biological role, catalyzes a mechanistically unusual reaction, the ATP-dependent insertion of CO2 between the N7 and N8 nitrogen atoms of 7,8-diaminopelargonic acid (DAPA, also called 7,8-diammoniononanoate) to form a ureido ring. In Brucella anthropi (strain ATCC 49188 / DSM 6882 / CCUG 24695 / JCM 21032 / LMG 3331 / NBRC 15819 / NCTC 12168 / Alc 37) (Ochrobactrum anthropi), this protein is ATP-dependent dethiobiotin synthetase BioD.